The chain runs to 538 residues: RNA-binding protein Ro60 (538 aa).

At Met1 the chain carries N-acetylmethionine. Residues Ser4 and Ser19 each carry the phosphoserine modification. One can recognise a TROVE domain in the interval 16 to 369; the sequence is VVNSEGGCVW…TFKTVEPTGK (354 aa). The RNA-binding stretch occupies residues 120–284; that stretch reads RIPTHLFTFI…EMPLTALLRN (165 aa). An N6-acetyllysine modification is found at Lys224. Residues 361-538 form a VWFA-like domain region; that stretch reads FKTVEPTGKR…VIRNFTLDVI (178 aa). Positions 378, 380, and 445 each coordinate a divalent metal cation.

It belongs to the Ro 60 kDa family. In terms of assembly, identified in a IGF2BP1-dependent mRNP granule complex containing untranslated mRNAs. Found in a complex with PUF60 and Y5 RNA. Interacts with RAB11FIP5. As to expression, highest in brain, followed by lung, muscle, kidney and heart. Lower levels are found in testis, liver and spleen.

The protein localises to the cytoplasm. Its function is as follows. RNA-binding protein that binds to misfolded non-coding RNAs, pre-5S rRNA, and several small cytoplasmic RNA molecules known as Y RNAs. May play roles in cilia formation and/or maintenance. The polypeptide is RNA-binding protein Ro60 (Mus musculus (Mouse)).